The following is a 211-amino-acid chain: Shikimate kinase (211 aa).

A compositionally biased stretch (low complexity) spans 1–13 (MNASANLCAASAN). Residues 1–24 (MNASANLCAASANDPQPGDQEAAH) form a disordered region. 50-55 (GAGKTT) provides a ligand contact to ATP. Thr54 is a Mg(2+) binding site. 3 residues coordinate substrate: Asp72, Arg96, and Gly118. An ATP-binding site is contributed by Arg156. Residue Arg175 coordinates substrate.

It belongs to the shikimate kinase family. In terms of assembly, monomer. Mg(2+) is required as a cofactor.

Its subcellular location is the cytoplasm. The catalysed reaction is shikimate + ATP = 3-phosphoshikimate + ADP + H(+). It participates in metabolic intermediate biosynthesis; chorismate biosynthesis; chorismate from D-erythrose 4-phosphate and phosphoenolpyruvate: step 5/7. Catalyzes the specific phosphorylation of the 3-hydroxyl group of shikimic acid using ATP as a cosubstrate. The sequence is that of Shikimate kinase from Bordetella parapertussis (strain 12822 / ATCC BAA-587 / NCTC 13253).